The sequence spans 40 residues: Photosystem II reaction center protein J (40 aa).

Residues 8–28 (IPLWIIGTVTGLLVIGLIGIF) form a helical membrane-spanning segment.

This sequence belongs to the PsbJ family. In terms of assembly, PSII is composed of 1 copy each of membrane proteins PsbA, PsbB, PsbC, PsbD, PsbE, PsbF, PsbH, PsbI, PsbJ, PsbK, PsbL, PsbM, PsbT, PsbX, PsbY, PsbZ, Psb30/Ycf12, at least 3 peripheral proteins of the oxygen-evolving complex and a large number of cofactors. It forms dimeric complexes.

It localises to the plastid. The protein resides in the chloroplast thylakoid membrane. In terms of biological role, one of the components of the core complex of photosystem II (PSII). PSII is a light-driven water:plastoquinone oxidoreductase that uses light energy to abstract electrons from H(2)O, generating O(2) and a proton gradient subsequently used for ATP formation. It consists of a core antenna complex that captures photons, and an electron transfer chain that converts photonic excitation into a charge separation. The chain is Photosystem II reaction center protein J from Ipomoea purpurea (Common morning glory).